A 448-amino-acid polypeptide reads, in one-letter code: Methylenetetrahydrofolate--tRNA-(uracil-5-)-methyltransferase TrmFO (448 aa).

13–18 (GAGLAG) serves as a coordination point for FAD.

It belongs to the MnmG family. TrmFO subfamily. Requires FAD as cofactor.

It is found in the cytoplasm. The catalysed reaction is uridine(54) in tRNA + (6R)-5,10-methylene-5,6,7,8-tetrahydrofolate + NADH + H(+) = 5-methyluridine(54) in tRNA + (6S)-5,6,7,8-tetrahydrofolate + NAD(+). It catalyses the reaction uridine(54) in tRNA + (6R)-5,10-methylene-5,6,7,8-tetrahydrofolate + NADPH + H(+) = 5-methyluridine(54) in tRNA + (6S)-5,6,7,8-tetrahydrofolate + NADP(+). Its function is as follows. Catalyzes the folate-dependent formation of 5-methyl-uridine at position 54 (M-5-U54) in all tRNAs. The polypeptide is Methylenetetrahydrofolate--tRNA-(uracil-5-)-methyltransferase TrmFO (Streptococcus pyogenes serotype M18 (strain MGAS8232)).